Reading from the N-terminus, the 328-residue chain is Tetraacyldisaccharide 4'-kinase (328 aa).

55–62 (TAGGNGKT) is an ATP binding site.

The protein belongs to the LpxK family.

The enzyme catalyses a lipid A disaccharide + ATP = a lipid IVA + ADP + H(+). The protein operates within glycolipid biosynthesis; lipid IV(A) biosynthesis; lipid IV(A) from (3R)-3-hydroxytetradecanoyl-[acyl-carrier-protein] and UDP-N-acetyl-alpha-D-glucosamine: step 6/6. Functionally, transfers the gamma-phosphate of ATP to the 4'-position of a tetraacyldisaccharide 1-phosphate intermediate (termed DS-1-P) to form tetraacyldisaccharide 1,4'-bis-phosphate (lipid IVA). This Escherichia coli O17:K52:H18 (strain UMN026 / ExPEC) protein is Tetraacyldisaccharide 4'-kinase.